We begin with the raw amino-acid sequence, 311 residues long: JNK1/MAPK8-associated membrane protein (311 aa).

Residues 1–57 (MAVDIQPACLGLYCGKTLLFKNGSSEIYGECGVCPRGQRTNAQKYCQPCTESPELYD) lie on the Lumenal side of the membrane. The N-linked (GlcNAc...) asparagine glycan is linked to asparagine 22. Residues 58-78 (WLYLGFMAMLPLVLHWFFIEW) form a helical membrane-spanning segment. Residues 79-87 (YSGKKSSSA) are Cytoplasmic-facing. Residues 88 to 108 (LFQHITALFECTMAAIITLLV) traverse the membrane as a helical segment. The Lumenal segment spans residues 109 to 149 (SDPVGVLYIRSCRVLMLSDWYTMLYNPSPDYVTTVHCTHEA). Residues 150–170 (VYPLYTIVFVYYAFCLVLMML) traverse the membrane as a helical segment. The Cytoplasmic portion of the chain corresponds to 171–188 (LRPLLVKKIACGLGKSDR). Residues 189–209 (FKSIYAALYFFPILTVLQAVG) traverse the membrane as a helical segment. A topological domain (lumenal) is located at residue glycine 210. A helical transmembrane segment spans residues 211 to 231 (GLLYYAFPYIILVLSLVTLAV). At 232–250 (YMSASEIENCYDLLVRKKR) the chain is on the cytoplasmic side. Residues 251-271 (LIVLFSHWLLHAYGIVSISRV) form a helical membrane-spanning segment. Residues 272 to 277 (DRLEHD) lie on the Lumenal side of the membrane. A helical transmembrane segment spans residues 278-298 (LPLLALVPTPALFYLFTAKFT). The Cytoplasmic segment spans residues 299 to 311 (EPSRILSEGANGH).

In terms of assembly, interacts with RNF5 and MAPK8, but not with MAPK9. Binding to MAPK8 occurs before and after exposure to stress, such as UV irradiation. After exposure to stress, interacts with phosphorylated MAPK8. Competes with DUSP10 for MAPK8 binding. Associates with multiple components of the proteasome and with ERAD regulatory proteins, including AMFR/GP78, CANX, PSMC1, PSMC2, PSMC3/TBP1, PSMC5, PSMC6, PSMD8, SEC61-ALPHA and UFD1. Post-translationally, ubiquitinated by RNF5 via 'Lys-63'-linked ubiquitin linkage in a UBE2N-dependent manner. Ubiquitination decreases association with components of the proteasome and ERAD. As to expression, expressed in numerous tissues, including brain, spleen, thymus, liver, kidney and testis.

It localises to the endoplasmic reticulum membrane. Its function is as follows. Regulates the duration of MAPK8 activity in response to various stress stimuli. Facilitates degradation of misfolded endoplasmic reticulum (ER) proteins through the recruitment of components of the proteasome and endoplasmic reticulum-associated degradation (ERAD) system. The sequence is that of JNK1/MAPK8-associated membrane protein (Jkamp) from Mus musculus (Mouse).